Consider the following 141-residue polypeptide: Putative pre-16S rRNA nuclease (141 aa).

The protein belongs to the YqgF nuclease family.

It localises to the cytoplasm. Could be a nuclease involved in processing of the 5'-end of pre-16S rRNA. The sequence is that of Putative pre-16S rRNA nuclease from Clostridioides difficile (strain 630) (Peptoclostridium difficile).